The chain runs to 355 residues: uncharacterized protein (355 aa).

The tract at residues 1–104 (MGTKGLPLYP…EQAKTVQGGR (104 aa)) is disordered. Lysine 19 is modified (N6-acetyllysine). Positions 45-54 (EEGTDLEGDM) are enriched in acidic residues. At serine 175 the chain carries Phosphoserine. 2 disordered regions span residues 247-310 (PRGS…AAYK) and 325-355 (SITS…GKKP). Tyrosine 293 bears the Phosphotyrosine mark. At serine 294 the chain carries Phosphoserine. Residues 325–334 (SITSLSSRTT) show a composition bias toward polar residues. The segment covering 336–348 (LPAADPFALAPFP) has biased composition (low complexity).

This is an uncharacterized protein from Homo sapiens (Human).